We begin with the raw amino-acid sequence, 386 residues long: Acetate kinase (386 aa).

Mg(2+) is bound at residue asparagine 7. Lysine 14 lines the ATP pocket. Arginine 78 contributes to the substrate binding site. The Proton donor/acceptor role is filled by aspartate 135. ATP is bound by residues 195 to 199 (HLGNG), 268 to 270 (DMR), and 316 to 320 (GIGEN). Residue glutamate 370 coordinates Mg(2+).

Belongs to the acetokinase family. In terms of assembly, homodimer. Requires Mg(2+) as cofactor. Mn(2+) serves as cofactor.

Its subcellular location is the cytoplasm. It carries out the reaction acetate + ATP = acetyl phosphate + ADP. It functions in the pathway metabolic intermediate biosynthesis; acetyl-CoA biosynthesis; acetyl-CoA from acetate: step 1/2. Functionally, catalyzes the formation of acetyl phosphate from acetate and ATP. Can also catalyze the reverse reaction. The chain is Acetate kinase from Arthrobacter sp. (strain FB24).